We begin with the raw amino-acid sequence, 267 residues long: 4-hydroxy-tetrahydrodipicolinate reductase (267 aa).

NAD(+) contacts are provided by residues 8 to 13 (GAAGRM) and Asp-34. Residue Arg-35 participates in NADP(+) binding. Residues 98–100 (GTT) and 122–125 (AANF) contribute to the NAD(+) site. His-155 serves as the catalytic Proton donor/acceptor. His-156 lines the (S)-2,3,4,5-tetrahydrodipicolinate pocket. Lys-159 acts as the Proton donor in catalysis. Position 165-166 (165-166 (GT)) interacts with (S)-2,3,4,5-tetrahydrodipicolinate.

This sequence belongs to the DapB family.

The protein localises to the cytoplasm. It carries out the reaction (S)-2,3,4,5-tetrahydrodipicolinate + NAD(+) + H2O = (2S,4S)-4-hydroxy-2,3,4,5-tetrahydrodipicolinate + NADH + H(+). The catalysed reaction is (S)-2,3,4,5-tetrahydrodipicolinate + NADP(+) + H2O = (2S,4S)-4-hydroxy-2,3,4,5-tetrahydrodipicolinate + NADPH + H(+). It participates in amino-acid biosynthesis; L-lysine biosynthesis via DAP pathway; (S)-tetrahydrodipicolinate from L-aspartate: step 4/4. Its function is as follows. Catalyzes the conversion of 4-hydroxy-tetrahydrodipicolinate (HTPA) to tetrahydrodipicolinate. The chain is 4-hydroxy-tetrahydrodipicolinate reductase from Pseudomonas putida (strain W619).